A 272-amino-acid polypeptide reads, in one-letter code: Acyl-[acyl-carrier-protein]--UDP-N-acetylglucosamine O-acyltransferase (272 aa).

It belongs to the transferase hexapeptide repeat family. LpxA subfamily. Homotrimer.

It localises to the cytoplasm. The catalysed reaction is a (3R)-hydroxyacyl-[ACP] + UDP-N-acetyl-alpha-D-glucosamine = a UDP-3-O-[(3R)-3-hydroxyacyl]-N-acetyl-alpha-D-glucosamine + holo-[ACP]. The protein operates within glycolipid biosynthesis; lipid IV(A) biosynthesis; lipid IV(A) from (3R)-3-hydroxytetradecanoyl-[acyl-carrier-protein] and UDP-N-acetyl-alpha-D-glucosamine: step 1/6. Functionally, involved in the biosynthesis of lipid A, a phosphorylated glycolipid that anchors the lipopolysaccharide to the outer membrane of the cell. The sequence is that of Acyl-[acyl-carrier-protein]--UDP-N-acetylglucosamine O-acyltransferase from Rhizobium johnstonii (strain DSM 114642 / LMG 32736 / 3841) (Rhizobium leguminosarum bv. viciae).